The primary structure comprises 238 residues: Ribitol-5-phosphate cytidylyltransferase (238 aa).

CTP contacts are provided by residues 7–10 (LAGG) and 81–87 (GDDRNHS).

It belongs to the IspD/TarI cytidylyltransferase family. TarI subfamily.

It carries out the reaction D-ribitol 5-phosphate + CTP + H(+) = CDP-L-ribitol + diphosphate. It participates in cell wall biogenesis; poly(ribitol phosphate) teichoic acid biosynthesis. Catalyzes the transfer of the cytidylyl group of CTP to D-ribitol 5-phosphate. The sequence is that of Ribitol-5-phosphate cytidylyltransferase from Staphylococcus epidermidis (strain ATCC 12228 / FDA PCI 1200).